A 159-amino-acid polypeptide reads, in one-letter code: Phosphodiesterase delta-like protein (159 aa).

This sequence belongs to the PDE6D/unc-119 family.

This is Phosphodiesterase delta-like protein (pdl-1) from Caenorhabditis elegans.